The following is a 445-amino-acid chain: Gasdermin-A (445 aa).

A triggers pyroptosis region spans residues 1 to 251; it reads MTMFENVTRA…VILIQASDVG (251 aa). 9–13 is an a cardiolipin binding site; sequence RALAR. The next 4 beta stranded transmembrane spans lie at 78–95, 99–120, 163–179, and 183–197; these read NFGFKNMLDTRVEGDVDV, VKVKGTAGLSQNSTLEVQTLSV, VTLERAGKAEACFSLPF, and LGLQGSINHKEAVTI.

It belongs to the gasdermin family. Homooligomer; homooligomeric ring-shaped pore complex containing 18-36 subunits when inserted in the membrane. In terms of processing, cleavage by S.pyogenes SpeB relieves autoinhibition by releasing the N-terminal moiety (Gasdermin-A, N-terminal) that initiates pyroptosis. Palmitoylated. As to expression, expressed predominantly in the gastrointestinal tract and, at a lower level, in the skin. Also detected in mammary gland. In the gastrointestinal tract, mainly expressed in differentiated cells, including the differentiated cell layer of esophagus and mucus-secreting pit cells of the gastric epithelium. Down-regulated in gastric cancer cells.

It localises to the cytoplasm. It is found in the perinuclear region. Its subcellular location is the cytosol. The protein resides in the cell membrane. With respect to regulation, the full-length protein before cleavage is inactive: intramolecular interactions between N- and C-terminal domains mediate autoinhibition in the absence of activation signal. The intrinsic pyroptosis-inducing activity is carried by the released N-terminal moiety (Gasdermin-A, N-terminal) following cleavage by S.pyogenes effector protein SpeB. This form constitutes the precursor of the pore-forming protein and acts as a sensor of infection: upon infection by S.pyogenes, specifically cleaved by S.pyogenes effector protein SpeB in epithelial cells, releasing the N-terminal moiety (Gasdermin-A, N-terminal) that binds to membranes and forms pores, triggering pyroptosis. Its function is as follows. Pore-forming protein that causes membrane permeabilization and pyroptosis. Released upon cleavage by S.pyogenes effector protein SpeB, and binds to membrane inner leaflet lipids. Homooligomerizes within the membrane and forms pores of 10-15 nanometers (nm) of inner diameter, triggering pyroptosis. Pyroptosis triggers the elimination of the infected skin cell, depriving the pathogen of its protective niche, while inducing an inflammatory response. This ultimately prevents bacterial penetration of the epithelial barrier and a subsequent systemic dissemination of the pathogen. Binds to cardiolipin and other acidic phospholipids, such as phosphatidylserine, which mediate its targeting to the inner leaflet membrane. This is Gasdermin-A from Homo sapiens (Human).